A 356-amino-acid polypeptide reads, in one-letter code: MDFITIDLKERSYPIYFAYDSFDKLGEIVKKHVRSSKTFIITDFNVYPLYFEKLNESLKKSRFDVSYEVIPAGETSKTMEMAQRLLEKAYDYGLLRDSSVIALGGGVVGDIAGFVAATYMRGIDFVQIPTTLLAQVDSSVGGKVAVNLKKGKNIIGAFHQPKMVYIDTAVLNTLDKREILGGLAEIIKYGIIWDFSLFEYIESNIYEILDLEEDKLRHIIKKSCEIKGKIVSLDEKEENLRSILNFGHTIGHAIEALTGYERYIHGEAVAIGMVYACKLALNLGYIDEKYFERIFSLIQRTGLPTDYEDLHKEDIVEAIKLDKKSREAKINFVLLRGLGKAEVTTVKEEEILKVLK.

NAD(+) is bound by residues 106-110 (GVVGD), 130-131 (TT), lysine 143, and lysine 152. Residues glutamate 185, histidine 248, and histidine 265 each coordinate Zn(2+).

Belongs to the sugar phosphate cyclases superfamily. Dehydroquinate synthase family. Co(2+) is required as a cofactor. Requires Zn(2+) as cofactor. The cofactor is NAD(+).

It localises to the cytoplasm. The enzyme catalyses 7-phospho-2-dehydro-3-deoxy-D-arabino-heptonate = 3-dehydroquinate + phosphate. It functions in the pathway metabolic intermediate biosynthesis; chorismate biosynthesis; chorismate from D-erythrose 4-phosphate and phosphoenolpyruvate: step 2/7. Catalyzes the conversion of 3-deoxy-D-arabino-heptulosonate 7-phosphate (DAHP) to dehydroquinate (DHQ). This is 3-dehydroquinate synthase from Thermoanaerobacter pseudethanolicus (strain ATCC 33223 / 39E) (Clostridium thermohydrosulfuricum).